A 185-amino-acid chain; its full sequence is Ribose 1,5-bisphosphate phosphokinase PhnN (185 aa).

It belongs to the ribose 1,5-bisphosphokinase family.

It carries out the reaction alpha-D-ribose 1,5-bisphosphate + ATP = 5-phospho-alpha-D-ribose 1-diphosphate + ADP. It functions in the pathway metabolic intermediate biosynthesis; 5-phospho-alpha-D-ribose 1-diphosphate biosynthesis; 5-phospho-alpha-D-ribose 1-diphosphate from D-ribose 5-phosphate (route II): step 3/3. Functionally, catalyzes the phosphorylation of ribose 1,5-bisphosphate to 5-phospho-D-ribosyl alpha-1-diphosphate (PRPP). The polypeptide is Ribose 1,5-bisphosphate phosphokinase PhnN (Escherichia coli (strain SMS-3-5 / SECEC)).